The following is a 1176-amino-acid chain: Pesticidal crystal protein Cry1Cb (1176 aa).

The protein belongs to the delta endotoxin family.

Its function is as follows. Promotes colloidosmotic lysis by binding to the midgut epithelial cells of insects. Toxic to Spodoptera exigua and Trichoplusia ni. The sequence is that of Pesticidal crystal protein Cry1Cb (cry1Cb) from Bacillus thuringiensis subsp. galleriae.